Reading from the N-terminus, the 369-residue chain is 3',5'-cyclic-nucleotide phosphodiesterase 1 (369 aa).

This sequence belongs to the cyclic nucleotide phosphodiesterase class-II family.

It catalyses the reaction a nucleoside 3',5'-cyclic phosphate + H2O = a nucleoside 5'-phosphate + H(+). Functionally, controls the level of cAMP in yeast cells, together with the high-affinity cAMP phosphodiesterase (PDE2). The chain is 3',5'-cyclic-nucleotide phosphodiesterase 1 (PDE1) from Saccharomyces cerevisiae (strain ATCC 204508 / S288c) (Baker's yeast).